The sequence spans 639 residues: Threonine--tRNA ligase (639 aa).

The TGS domain maps to 1–61 (MIHITLPDGS…TQDSPLSIVT (61 aa)). Residues 242-533 (DHRKLGRELD…LIEEHAGALP (292 aa)) form a catalytic region. Zn(2+) contacts are provided by Cys-333, His-384, and His-510.

Belongs to the class-II aminoacyl-tRNA synthetase family. As to quaternary structure, homodimer. The cofactor is Zn(2+).

It is found in the cytoplasm. The catalysed reaction is tRNA(Thr) + L-threonine + ATP = L-threonyl-tRNA(Thr) + AMP + diphosphate + H(+). Functionally, catalyzes the attachment of threonine to tRNA(Thr) in a two-step reaction: L-threonine is first activated by ATP to form Thr-AMP and then transferred to the acceptor end of tRNA(Thr). Also edits incorrectly charged L-seryl-tRNA(Thr). The protein is Threonine--tRNA ligase of Acidovorax ebreus (strain TPSY) (Diaphorobacter sp. (strain TPSY)).